The chain runs to 589 residues: Putative adenine deaminase BC_3012 (589 aa).

It belongs to the metallo-dependent hydrolases superfamily. Adenine deaminase family.

It catalyses the reaction adenine + H2O + H(+) = hypoxanthine + NH4(+). This is Putative adenine deaminase BC_3012 from Bacillus cereus (strain ATCC 14579 / DSM 31 / CCUG 7414 / JCM 2152 / NBRC 15305 / NCIMB 9373 / NCTC 2599 / NRRL B-3711).